The chain runs to 346 residues: Sesquiterpene synthase Agr1 (346 aa).

Residues Asp-98, Asn-234, Ser-238, and Glu-242 each contribute to the Mg(2+) site. The short motif at 98 to 102 is the DDXXD motif element; sequence DNLSD. Residues Arg-322 and Tyr-323 each coordinate (2E,6E)-farnesyl diphosphate.

This sequence belongs to the terpene synthase family. Mg(2+) serves as cofactor.

The catalysed reaction is (2E,6E)-farnesyl diphosphate = delta-cadinene + diphosphate. The enzyme catalyses (2E,6E)-farnesyl diphosphate = alpha-muurolene + diphosphate. It carries out the reaction (2E,6E)-farnesyl diphosphate = gamma-muurolene + diphosphate. It catalyses the reaction (2E,6E)-farnesyl diphosphate = alpha-selinene + diphosphate. Terpene cyclase that catalyzes the cyclization of farnesyl diphosphate (FPP) to various sesquiterpenes, including alpha-muurolene, gamma-muurolene, alpha-selinene, beta-selinene, delta-cadinene, alpha-cadinol and delta-cadinol. Delta-cadinene is the major product of Agr1. The chain is Sesquiterpene synthase Agr1 from Cyclocybe aegerita (Black poplar mushroom).